A 605-amino-acid chain; its full sequence is Phosphoenolpyruvate carboxykinase (ATP) (605 aa).

A compositionally biased stretch (low complexity) spans 27–48 (SGPSSSFINNNNSNNNNNKSSN). Residues 27 to 67 (SGPSSSFINNNNSNNNNNKSSNMFNHDHVNKTNLHPGGVKP) are disordered. ATP is bound at residue 307-314 (GLSGTGKT).

Belongs to the phosphoenolpyruvate carboxykinase (ATP) family.

The catalysed reaction is oxaloacetate + ATP = phosphoenolpyruvate + ADP + CO2. The protein operates within carbohydrate biosynthesis; gluconeogenesis. The sequence is that of Phosphoenolpyruvate carboxykinase (ATP) (acu-6) from Neurospora crassa (strain ATCC 24698 / 74-OR23-1A / CBS 708.71 / DSM 1257 / FGSC 987).